We begin with the raw amino-acid sequence, 267 residues long: 2-keto-3-deoxy-L-rhamnonate aldolase (267 aa).

Catalysis depends on His49, which acts as the Proton acceptor. Substrate is bound at residue Gln151. Residue Glu153 participates in Mg(2+) binding. Ala178 and Asp179 together coordinate substrate. Asp179 contacts Mg(2+).

Belongs to the HpcH/HpaI aldolase family. KDR aldolase subfamily. As to quaternary structure, homohexamer. Mg(2+) is required as a cofactor. Ni(2+) serves as cofactor.

It catalyses the reaction 2-dehydro-3-deoxy-L-rhamnonate = (S)-lactaldehyde + pyruvate. It carries out the reaction D-glyceraldehyde + 3-hydroxypyruvate = (3R,4S,5R)-3,4,5,6-tetrahydroxy-2-oxohexanoate. The enzyme catalyses D-glyceraldehyde + 3-hydroxypyruvate = 2-dehydro-D-gluconate. The catalysed reaction is D-glyceraldehyde + 3-hydroxypyruvate = 2-dehydro-D-galactonate. It catalyses the reaction D-glyceraldehyde + pyruvate = 2-dehydro-3-deoxy-L-galactonate. It carries out the reaction 2-dehydro-3-deoxy-D-gluconate = D-glyceraldehyde + pyruvate. Functionally, catalyzes the reversible retro-aldol cleavage of 2-keto-3-deoxy-L-rhamnonate (KDR) to pyruvate and lactaldehyde. 2-keto-3-deoxy-L-mannonate, 2-keto-3-deoxy-L-lyxonate and 4-hydroxy-2-ketoheptane-1,7-dioate (HKHD) are also reasonably good substrates, although 2-keto-3-deoxy-L-rhamnonate is likely to be the physiological substrate. In vitro, can catalyze the aldolisation reaction between hydroxypyruvate (HPA) or pyruvate (PA) and D-glyceraldehyde (D-GA). The condensation of hydroxypyruvate and D-glyceraldehyde produces (3R,4S,5R)-3,4,5,6-tetrahydroxy-2-oxohexanoate as the major product, 2-dehydro-D-gluconate and 2-dehydro-D-galactonate. The condensation of pyruvate and D-glyceraldehyde produces 2-dehydro-3-deoxy-L-galactonate as the major product and 2-dehydro-3-deoxy-D-gluconate. This chain is 2-keto-3-deoxy-L-rhamnonate aldolase (rhmA), found in Escherichia coli (strain K12).